Reading from the N-terminus, the 1076-residue chain is Inositol-1,4,5-trisphosphate 5-phosphatase 1 (1076 aa).

An SAC domain is found at leucine 144 to glycine 474. The tract at residues tyrosine 534 to serine 880 is catalytic. Disordered stretches follow at residues alanine 930–serine 958 and leucine 977–valine 1076. Low complexity-rich tracts occupy residues leucine 977–asparagine 1004 and serine 1025–valine 1040. The segment covering proline 1065–valine 1076 has biased composition (polar residues).

The protein belongs to the synaptojanin family. In the central section; belongs to the inositol 1,4,5-trisphosphate 5-phosphatase family. It depends on Mg(2+) as a cofactor.

It localises to the cytoplasm. It carries out the reaction a 1,2-diacyl-sn-glycero-3-phospho-(1D-myo-inositol-4,5-bisphosphate) + H2O = a 1,2-diacyl-sn-glycero-3-phospho-(1D-myo-inositol 4-phosphate) + phosphate. Its function is as follows. Controls the cellular levels and subcellular distribution of phosphatidylinositol 3-phosphate and phosphatidylinositol 4,5-bisphosphate. Involved in distinct membrane trafficking and signal transduction pathways. Highly active against a range of soluble and lipid inositol phosphates. Active in dephosphorylating the 5-position of Ins(1,4,5)P3 and Ins(1,3,4,5)P4 and to a lesser extent Ins(1,4,5,6)P4. The enzyme is also active against PI(4,5)P2 presented in sonicated vesicles and Triton mixed micelles, and somewhat less active against PI(3,5)P2 in unilamellar vesicles. Activity against PI(3,5)P2 drops sharply when this substrate is presented in mixed micelles. Also hydrolyzes PIP3 to produce PI(3,4)P2. This chain is Inositol-1,4,5-trisphosphate 5-phosphatase 1 (syj1), found in Schizosaccharomyces pombe (strain 972 / ATCC 24843) (Fission yeast).